The following is a 188-amino-acid chain: Peptidyl-tRNA hydrolase (188 aa).

Phe-15 is a tRNA binding site. Catalysis depends on His-20, which acts as the Proton acceptor. 3 residues coordinate tRNA: Tyr-64, Asn-66, and Asn-112.

Belongs to the PTH family. Monomer.

The protein localises to the cytoplasm. The enzyme catalyses an N-acyl-L-alpha-aminoacyl-tRNA + H2O = an N-acyl-L-amino acid + a tRNA + H(+). In terms of biological role, hydrolyzes ribosome-free peptidyl-tRNAs (with 1 or more amino acids incorporated), which drop off the ribosome during protein synthesis, or as a result of ribosome stalling. Its function is as follows. Catalyzes the release of premature peptidyl moieties from peptidyl-tRNA molecules trapped in stalled 50S ribosomal subunits, and thus maintains levels of free tRNAs and 50S ribosomes. This chain is Peptidyl-tRNA hydrolase, found in Borrelia turicatae (strain 91E135).